The primary structure comprises 1311 residues: Zinc finger protein 521 (1311 aa).

Residues 47-67 (HSCDSCLQVFESLSDITEHKI) form a C2H2-type 1; degenerate zinc finger. The disordered stretch occupies residues 81 to 108 (DPSCSWPASSPSSKDQTSPSHGEGCDFG). Residues 83–102 (SCSWPASSPSSKDQTSPSHG) are compositionally biased toward low complexity. 7 consecutive C2H2-type zinc fingers follow at residues 118–140 (YPCQFCDKSFSRLSYLKHHEQSH), 146–168 (FKCTYCSRLFKHKRSRDRHIKLH), 174–196 (YHCSECDAAFSRSDHLKIHLKTH), 202–224 (YKCAVCRRGFLSSSSLHGHMQVH), 246–269 (QKCSQCEEGFDFPEDLQKHIAECH), 281–304 (LQCMYCHELFVEETSLMNHIEQVH), and 310–332 (NSCSICSESFLTVEELYSHMDSH). The segment at 357 to 398 (TTPDSNLSVDSSTMVEAAPPIPKSRGRKRAAQQTSDMTGPSS) is disordered. Polar residues-rich tracts occupy residues 359-370 (PDSNLSVDSSTM) and 387-398 (AQQTSDMTGPSS). A C2H2-type 9; degenerate zinc finger spans residues 405–429 (YSCIYCNKQLFSSLAVLQIHLKTMH). 3 C2H2-type zinc fingers span residues 437 to 460 (HICQYCLEVLPSLYNLNEHLKQVH), 477 to 500 (YQCNFCSEVVNDLNTLQEHIRCSH), and 513 to 536 (FFCPHCYMGFLTDSSLEEHIRQVH). S546 carries the post-translational modification Phosphoserine. The C2H2-type 13; atypical zinc-finger motif lies at 560 to 585 (YSCSYCTNSPIFNSVLKLNKHIKENH). Residues S605 and S608 each carry the phosphoserine modification. C2H2-type zinc fingers lie at residues 634–656 (YICNQCGAKYTSLDSFQTHLKTH), 664–686 (LTCPQCNKEFPNQESLLKHVTIH), 694–717 (YICESCDKQFTSVDDLQKHLLDMH), 722–745 (FRCTLCQEVFDSKVSIQLHLAVKH), 752–775 (YRCTSCNWDFRNETDLQLHVKHNH), 783–805 (HKCIFCGESFGTEVELQCHITTH), and 809–832 (YNCRFCSKAFHAVILLEKHLREKH). The tract at residues 863–883 (TNSQESHNSHDGSEEDVDSSE) is disordered. A C2H2-type 21; degenerate zinc finger spans residues 886–908 (YGCDICGAAYTMETLLQNHQLRD). C2H2-type zinc fingers lie at residues 930-952 (YKCNVCSRTFFSENGLREHMQTH), 959-981 (YMCPICGERFPSLLTLTEHKVTH), and 1020-1042 (FRCVVCMQTVTSTLELKIHGTFH). The C2H2-type 25; degenerate zinc-finger motif lies at 1065–1083 (YKCASCLKEFRSKQDLVKL). Low complexity predominate over residues 1105–1119 (PGLSLPPGASRPGLG). The segment at 1105-1136 (PGLSLPPGASRPGLGQNESLSAMEGKGKAGGL) is disordered. 5 consecutive C2H2-type zinc fingers follow at residues 1138–1161 (TRCSSCNVKFESESELQNHIQTVH), 1195–1217 (YQCIKCQMVFYNEWDIQVHVANH), 1225–1247 (HECKLCSQTFDSPAKLQCHLIEH), 1256–1279 (FKCPVCFTVFVQANKLQQHIFSAH), and 1286–1309 (YDCTQCPQKFFFQTELQNHTMTQH). Residue K1146 forms a Glycyl lysine isopeptide (Lys-Gly) (interchain with G-Cter in SUMO2) linkage.

This sequence belongs to the krueppel C2H2-type zinc-finger protein family. Interacts with EBF1. Interacts with SMAD1 and SMAD4. In terms of tissue distribution, widely expressed. Expressed in all B-cell stages.

The protein localises to the nucleus. Functionally, transcription factor that can both act as an activator or a repressor depending on the context. Involved in BMP signaling and in the regulation of the immature compartment of the hematopoietic system. Associates with SMADs in response to BMP2 leading to activate transcription of BMP target genes. Acts as a transcriptional repressor via its interaction with EBF1, a transcription factor involved specification of B-cell lineage; this interaction preventing EBF1 to bind DNA and activate target genes. The chain is Zinc finger protein 521 (Znf521) from Mus musculus (Mouse).